The chain runs to 178 residues: Fatty-acid and retinol-binding protein 1 (178 aa).

The signal sequence occupies residues 1–16 (MYHRLILLALIGTTMA). 2 coiled-coil regions span residues 67–89 (DAALEALKAKSDNLYKNAVELRN) and 130–153 (KQAARDIIAKYQALSEETKEELKV).

This sequence belongs to the fatty-acid and retinol-binding protein (FARBP) family. Post-translationally, not glycosylated.

It is found in the secreted. Functionally, binds retinol and different fatty acids. The protein is Fatty-acid and retinol-binding protein 1 of Wuchereria bancrofti.